The primary structure comprises 259 residues: ATP synthase subunit a (259 aa).

6 consecutive transmembrane segments (helical) span residues 37 to 57, 101 to 121, 131 to 151, 157 to 177, 203 to 223, and 232 to 252; these read LSIT…FLFM, YFPA…LGLI, LVVT…LAIV, FIGF…MVPI, VLAI…LMPA, and FELF…CVYI.

It belongs to the ATPase A chain family. F-type ATPases have 2 components, CF(1) - the catalytic core - and CF(0) - the membrane proton channel. CF(1) has five subunits: alpha(3), beta(3), gamma(1), delta(1), epsilon(1). CF(0) has three main subunits: a(1), b(2) and c(9-12). The alpha and beta chains form an alternating ring which encloses part of the gamma chain. CF(1) is attached to CF(0) by a central stalk formed by the gamma and epsilon chains, while a peripheral stalk is formed by the delta and b chains.

The protein localises to the cell inner membrane. In terms of biological role, key component of the proton channel; it plays a direct role in the translocation of protons across the membrane. This is ATP synthase subunit a from Magnetococcus marinus (strain ATCC BAA-1437 / JCM 17883 / MC-1).